The chain runs to 353 residues: uncharacterized protein (353 aa).

Polar residues predominate over residues 233 to 245; that stretch reads ASCSNNEPSASLE. The tract at residues 233–265 is disordered; sequence ASCSNNEPSASLESESRHFSPVNSLSPSSLSTD. Positions 252–263 are enriched in low complexity; that stretch reads SPVNSLSPSSLS.

This is an uncharacterized protein from Saccharomyces cerevisiae (strain ATCC 204508 / S288c) (Baker's yeast).